A 223-amino-acid chain; its full sequence is Urease accessory protein UreF (223 aa).

The protein belongs to the UreF family. As to quaternary structure, ureD, UreF and UreG form a complex that acts as a GTP-hydrolysis-dependent molecular chaperone, activating the urease apoprotein by helping to assemble the nickel containing metallocenter of UreC. The UreE protein probably delivers the nickel.

It localises to the cytoplasm. In terms of biological role, required for maturation of urease via the functional incorporation of the urease nickel metallocenter. The chain is Urease accessory protein UreF from Agrobacterium fabrum (strain C58 / ATCC 33970) (Agrobacterium tumefaciens (strain C58)).